Consider the following 515-residue polypeptide: Bifunctional purine biosynthesis protein PurH (515 aa).

The region spanning 1–145 is the MGS-like domain; sequence MTKRALISVS…KNHASVTVVV (145 aa).

It belongs to the PurH family.

It catalyses the reaction (6R)-10-formyltetrahydrofolate + 5-amino-1-(5-phospho-beta-D-ribosyl)imidazole-4-carboxamide = 5-formamido-1-(5-phospho-D-ribosyl)imidazole-4-carboxamide + (6S)-5,6,7,8-tetrahydrofolate. The catalysed reaction is IMP + H2O = 5-formamido-1-(5-phospho-D-ribosyl)imidazole-4-carboxamide. It functions in the pathway purine metabolism; IMP biosynthesis via de novo pathway; 5-formamido-1-(5-phospho-D-ribosyl)imidazole-4-carboxamide from 5-amino-1-(5-phospho-D-ribosyl)imidazole-4-carboxamide (10-formyl THF route): step 1/1. The protein operates within purine metabolism; IMP biosynthesis via de novo pathway; IMP from 5-formamido-1-(5-phospho-D-ribosyl)imidazole-4-carboxamide: step 1/1. This Streptococcus agalactiae serotype Ia (strain ATCC 27591 / A909 / CDC SS700) protein is Bifunctional purine biosynthesis protein PurH.